The primary structure comprises 334 residues: Glucokinase-like protein XF_1460 (334 aa).

18 to 23 (ADVGGT) is a binding site for ATP.

The protein belongs to the bacterial glucokinase family.

The sequence is that of Glucokinase-like protein XF_1460 from Xylella fastidiosa (strain 9a5c).